Consider the following 375-residue polypeptide: DNA replication and repair protein RecF (375 aa).

Residue 30–37 coordinates ATP; it reads GENAQGKT.

It belongs to the RecF family.

It localises to the cytoplasm. In terms of biological role, the RecF protein is involved in DNA metabolism; it is required for DNA replication and normal SOS inducibility. RecF binds preferentially to single-stranded, linear DNA. It also seems to bind ATP. In Bacillus cereus (strain G9842), this protein is DNA replication and repair protein RecF.